We begin with the raw amino-acid sequence, 561 residues long: Acyl-CoA ligase frbB (561 aa).

Residues 213 to 221 (TSGTSGAQK), 354 to 359 (PGWGLT), D437, R456, and K551 contribute to the ATP site. An SBD1 region spans residues 284 to 354 (DLKRVLGSIA…TLRPKWHLQP (71 aa)). Positions 355 to 417 (GWGLTEGGGA…MKSPSVIAGY (63 aa)) are SBD2.

The protein belongs to the ATP-dependent AMP-binding enzyme family.

It functions in the pathway antifungal biosynthesis. Functionally, acyl-CoA ligase; part of the gene cluster that mediates the biosynthesis of the antifungal antibiotic FR901469, an inhibitor of beta-1,3-glucansynthase, exerting antifungal activity against the pathogenes Candida albicans and Aspergillus fumigatus. FR901469 is a cyclic depsipeptide containing 12 amino acid residues and a fatty acid chain. The NRPS frbI contains 12 modules responsible for the formation of the depsipeptide backbone which is denoted as Acyl-Thr-Ala-Tyr-Val-4OHPro-Thr-Thr-3OHPro-threo3OHGln-Gly-Thr-Orn-OH (C71H116N14O23). The PKS frbB is probably involved in the production of the hydrocarbon chain, and the acyl-CoA ligase frbC might be involved in the transport of the chain to the peptide ptoduct of frbI. Because FR901469 contains 3 hydroxylated amino acid residues, the 3 oxygenases frbA, frbH, and frbJ might be participating in amino acid hydroxylation. As no thioesterase domains were detected in frbI or frbB, the thioesterases frbD and frbE may instead release and cyclize the products of the NRPS and PKS, respectively. This Dothideomycetidae sp. (strain 11243) (Fungal sp. (strain No.11243)) protein is Acyl-CoA ligase frbB.